The sequence spans 236 residues: Ribose-5-phosphate isomerase A (236 aa).

Substrate is bound by residues 31-34 (TGST), 84-87 (DGAD), and 97-100 (KGGG). E106 (proton acceptor) is an active-site residue. K124 is a binding site for substrate.

Belongs to the ribose 5-phosphate isomerase family. As to quaternary structure, homodimer.

The enzyme catalyses aldehydo-D-ribose 5-phosphate = D-ribulose 5-phosphate. It participates in carbohydrate degradation; pentose phosphate pathway; D-ribose 5-phosphate from D-ribulose 5-phosphate (non-oxidative stage): step 1/1. Its function is as follows. Catalyzes the reversible conversion of ribose-5-phosphate to ribulose 5-phosphate. This is Ribose-5-phosphate isomerase A from Polynucleobacter asymbioticus (strain DSM 18221 / CIP 109841 / QLW-P1DMWA-1) (Polynucleobacter necessarius subsp. asymbioticus).